Reading from the N-terminus, the 430-residue chain is Serine/threonine-protein kinase Sgk1 (430 aa).

Residues 1-60 (MTVKTEAARSTLTYSRMRGMVAILIAFMKQRRMGLNDFIQKLANNSYACKHPEVQSYLKI) are necessary for localization to the mitochondria. Residues 66–92 (PELMNANPSPPPSPSQQINLGPSSNPH) are disordered. The residue at position 74 (serine 74) is a Phosphoserine. Serine 78 carries the phosphoserine; by MAPK7 modification. The span at 81–91 (QQINLGPSSNP) shows a compositional bias: polar residues. The region spanning 98–354 (FHFLKVIGKG…FMEIKSHIFF (257 aa)) is the Protein kinase domain. ATP-binding positions include 104-112 (IGKGSFGKV) and lysine 127. A Nuclear localization signal motif is present at residues 131 to 141 (KKAILKKKEEK). Aspartate 222 (proton acceptor) is an active-site residue. Threonine 256 is modified (phosphothreonine; by PDPK1). Residues 355 to 430 (SLINWDDLIN…SYAPPMDSFL (76 aa)) enclose the AGC-kinase C-terminal domain. Threonine 368 carries the phosphothreonine; by PKA modification. Serine 396, serine 400, and serine 421 each carry phosphoserine.

It belongs to the protein kinase superfamily. AGC Ser/Thr protein kinase family. Homodimer; disulfide-linked. Forms a trimeric complex with FBXW7 and NOTCH1. Interacts with MAPK3/ERK1, MAPK1/ERK2, MAP2K1/MEK1, MAP2K2/MEK2, NEDD4, NEDD4L, MAPK7, CREB1, SLC9A3R2/NHERF2 and KCNJ1/ROMK1. Associates with the mammalian target of rapamycin complex 2 (mTORC2) via an interaction with MAPKAP1/SIN1. Interacts with MAPT/TAU. Post-translationally, regulated by phosphorylation. Activated by phosphorylation on Ser-421 by mTORC2, transforming it into a substrate for PDPK1 which phosphorylates it on Thr-256. Phosphorylation on Ser-396 and Ser-400 are also essential for its activity. Phosphorylation on Ser-78 by MAPK7 is required for growth factor-induced cell cycle progression. In terms of processing, ubiquitinated by NEDD4L; which promotes proteasomal degradation. Ubiquitinated by SYVN1 at the endoplasmic reticulum; which promotes rapid proteasomal degradation and maintains a high turnover rate in resting cells. In terms of tissue distribution, expressed in most tissues with highest levels in the ovary, thymus and lung. In the kidney, expressed within glomeruli of the cortex, at low levels in outer medulla and moderate levels in inner medulla and papilla.

It localises to the cytoplasm. The protein localises to the nucleus. Its subcellular location is the endoplasmic reticulum membrane. It is found in the cell membrane. The protein resides in the mitochondrion. It carries out the reaction L-seryl-[protein] + ATP = O-phospho-L-seryl-[protein] + ADP + H(+). The catalysed reaction is L-threonyl-[protein] + ATP = O-phospho-L-threonyl-[protein] + ADP + H(+). Two specific sites, one in the kinase domain (Thr-256) and the other in the C-terminal regulatory region (Ser-421), need to be phosphorylated for its full activation. Phosphorylation at Ser-396 and Ser-400 are also essential for its activity. Activated by WNK1, WNK2, WNK3 and WNK4. Serine/threonine-protein kinase which is involved in the regulation of a wide variety of ion channels, membrane transporters, cellular enzymes, transcription factors, neuronal excitability, cell growth, proliferation, survival, migration and apoptosis. Plays an important role in cellular stress response. Contributes to regulation of renal Na(+) retention, renal K(+) elimination, salt appetite, gastric acid secretion, intestinal Na(+)/H(+) exchange and nutrient transport, insulin-dependent salt sensitivity of blood pressure, salt sensitivity of peripheral glucose uptake, cardiac repolarization and memory consolidation. Up-regulates Na(+) channels: SCNN1A/ENAC, SCN5A and ASIC1/ACCN2, K(+) channels: KCNJ1/ROMK1, KCNA1-5, KCNQ1-5 and KCNE1, epithelial Ca(2+) channels: TRPV5 and TRPV6, chloride channels: BSND, CLCN2 and CFTR, glutamate transporters: SLC1A3/EAAT1, SLC1A2 /EAAT2, SLC1A1/EAAT3, SLC1A6/EAAT4 and SLC1A7/EAAT5, amino acid transporters: SLC1A5/ASCT2, SLC38A1/SN1 and SLC6A19, creatine transporter: SLC6A8, Na(+)/dicarboxylate cotransporter: SLC13A2/NADC1, Na(+)-dependent phosphate cotransporter: SLC34A2/NAPI-2B, glutamate receptor: GRIK2/GLUR6. Up-regulates carriers: SLC9A3/NHE3, SLC12A1/NKCC2, SLC12A3/NCC, SLC5A3/SMIT, SLC2A1/GLUT1, SLC5A1/SGLT1 and SLC15A2/PEPT2. Regulates enzymes: GSK3A/B, PMM2 and Na(+)/K(+) ATPase, and transcription factors: CTNNB1 and nuclear factor NF-kappa-B. Stimulates sodium transport into epithelial cells by enhancing the stability and expression of SCNN1A/ENAC. This is achieved by phosphorylating the NEDD4L ubiquitin E3 ligase, promoting its interaction with 14-3-3 proteins, thereby preventing it from binding to SCNN1A/ENAC and targeting it for degradation. Regulates store-operated Ca(+2) entry (SOCE) by stimulating ORAI1 and STIM1. Regulates KCNJ1/ROMK1 directly via its phosphorylation or indirectly via increased interaction with SLC9A3R2/NHERF2. Phosphorylates MDM2 and activates MDM2-dependent ubiquitination of p53/TP53. Phosphorylates SLC2A4/GLUT4 and up-regulates its activity. Phosphorylates APBB1/FE65 and promotes its localization to the nucleus. Phosphorylates FBXW7 and plays an inhibitory role in the NOTCH1 signaling. Phosphorylates FOXO1 resulting in its relocalization from the nucleus to the cytoplasm. Phosphorylates FOXO3, promoting its exit from the nucleus and interference with FOXO3-dependent transcription. Phosphorylates BRAF and MAP3K3/MEKK3 and inhibits their activity. Phosphorylates SLC9A3/NHE3 in response to dexamethasone, resulting in its activation and increased localization at the cell membrane. Phosphorylates CREB1. Necessary for vascular remodeling during angiogenesis. Phosphorylates MAPT/TAU and mediates microtubule depolymerization and neurite formation in hippocampal neurons. Phosphorylates MAPK1/ERK2 and activates it by enhancing its interaction with MAP2K1/MEK1 and MAP2K2/MEK2. May also play an important role in the development of particular groups of neurons in the postnatal brain. The sequence is that of Serine/threonine-protein kinase Sgk1 (Sgk1) from Rattus norvegicus (Rat).